A 170-amino-acid polypeptide reads, in one-letter code: ATP synthase subunit b (170 aa).

A helical transmembrane segment spans residues 11–31; sequence GLNTGDIIFQLIAMLILLALL.

It belongs to the ATPase B chain family. As to quaternary structure, F-type ATPases have 2 components, F(1) - the catalytic core - and F(0) - the membrane proton channel. F(1) has five subunits: alpha(3), beta(3), gamma(1), delta(1), epsilon(1). F(0) has three main subunits: a(1), b(2) and c(10-14). The alpha and beta chains form an alternating ring which encloses part of the gamma chain. F(1) is attached to F(0) by a central stalk formed by the gamma and epsilon chains, while a peripheral stalk is formed by the delta and b chains.

It localises to the cell membrane. Functionally, f(1)F(0) ATP synthase produces ATP from ADP in the presence of a proton or sodium gradient. F-type ATPases consist of two structural domains, F(1) containing the extramembraneous catalytic core and F(0) containing the membrane proton channel, linked together by a central stalk and a peripheral stalk. During catalysis, ATP synthesis in the catalytic domain of F(1) is coupled via a rotary mechanism of the central stalk subunits to proton translocation. Component of the F(0) channel, it forms part of the peripheral stalk, linking F(1) to F(0). This is ATP synthase subunit b from Bacillus pumilus (strain SAFR-032).